The chain runs to 25 residues: Non-specific lipid-transfer protein 3 (25 aa).

In terms of tissue distribution, seeds (at protein level).

Its function is as follows. Plant non-specific lipid-transfer proteins transfer phospholipids as well as galactolipids across membranes. May play a role in wax or cutin deposition in the cell walls of expanding epidermal cells and certain secretory tissues. Has antibacterial and antifungal activity. Displays antibacterial activity towards both Gram-negative bacteria, P.carotovorum (IC(50)=11.5 uM) and P.syringae (IC(50)=12.0 uM), and Gram-positive bacterium C.michiganensis subsp michiganense (IC(50)=11.2 uM). Also displays antifungal activity towards A.niger VKM F-33 (IC(50)=1.05 uM) and B.cinerea TSKHA (IC(50)=1.88 uM) and relatively moderate activity towards B.sorokiniana VKM F-1448 (IC(50)=1.55 uM). Displays some inhibitory activity towards P.infestans OSV12. The chain is Non-specific lipid-transfer protein 3 from Nigella sativa (Black cumin).